Reading from the N-terminus, the 299-residue chain is Ribosomal RNA small subunit methyltransferase H (299 aa).

S-adenosyl-L-methionine contacts are provided by residues 24–26 (GGH), Asp-43, Phe-68, Asp-90, and Gln-97.

Belongs to the methyltransferase superfamily. RsmH family.

It localises to the cytoplasm. The catalysed reaction is cytidine(1402) in 16S rRNA + S-adenosyl-L-methionine = N(4)-methylcytidine(1402) in 16S rRNA + S-adenosyl-L-homocysteine + H(+). Its function is as follows. Specifically methylates the N4 position of cytidine in position 1402 (C1402) of 16S rRNA. The protein is Ribosomal RNA small subunit methyltransferase H of Francisella tularensis subsp. tularensis (strain WY96-3418).